The following is a 265-amino-acid chain: NAD kinase 1 (265 aa).

Aspartate 45 (proton acceptor) is an active-site residue. NAD(+) is bound by residues 45-46 (DG), 122-123 (NE), arginine 148, aspartate 150, and alanine 185.

It belongs to the NAD kinase family. A divalent metal cation serves as cofactor.

It is found in the cytoplasm. It carries out the reaction NAD(+) + ATP = ADP + NADP(+) + H(+). Functionally, involved in the regulation of the intracellular balance of NAD and NADP, and is a key enzyme in the biosynthesis of NADP. Catalyzes specifically the phosphorylation on 2'-hydroxyl of the adenosine moiety of NAD to yield NADP. This Bacillus cereus (strain ATCC 10987 / NRS 248) protein is NAD kinase 1.